The sequence spans 48 residues: Entericidin B (48 aa).

An N-terminal signal peptide occupies residues Met1 to Ala21. Cys22 carries N-palmitoyl cysteine lipidation. Cys22 carries S-diacylglycerol cysteine lipidation.

Belongs to the EcnA/EcnB lipoprotein family.

It localises to the cell membrane. In terms of biological role, plays a role in the bacteriolysis. Is activated under conditions of high osmolarity by the factor sigma S. Entericidin A functions as an antidote. The polypeptide is Entericidin B (ecnB) (Escherichia coli O157:H7).